The primary structure comprises 293 residues: Phosphatidylserine decarboxylase proenzyme (293 aa).

Residues aspartate 88, histidine 144, and serine 247 each act as charge relay system; for autoendoproteolytic cleavage activity in the active site. Serine 247 (schiff-base intermediate with substrate; via pyruvic acid; for decarboxylase activity) is an active-site residue. At serine 247 the chain carries Pyruvic acid (Ser); by autocatalysis.

It belongs to the phosphatidylserine decarboxylase family. PSD-B subfamily. Prokaryotic type I sub-subfamily. In terms of assembly, heterodimer of a large membrane-associated beta subunit and a small pyruvoyl-containing alpha subunit. It depends on pyruvate as a cofactor. Is synthesized initially as an inactive proenzyme. Formation of the active enzyme involves a self-maturation process in which the active site pyruvoyl group is generated from an internal serine residue via an autocatalytic post-translational modification. Two non-identical subunits are generated from the proenzyme in this reaction, and the pyruvate is formed at the N-terminus of the alpha chain, which is derived from the carboxyl end of the proenzyme. The autoendoproteolytic cleavage occurs by a canonical serine protease mechanism, in which the side chain hydroxyl group of the serine supplies its oxygen atom to form the C-terminus of the beta chain, while the remainder of the serine residue undergoes an oxidative deamination to produce ammonia and the pyruvoyl prosthetic group on the alpha chain. During this reaction, the Ser that is part of the protease active site of the proenzyme becomes the pyruvoyl prosthetic group, which constitutes an essential element of the active site of the mature decarboxylase.

The protein localises to the cell membrane. The enzyme catalyses a 1,2-diacyl-sn-glycero-3-phospho-L-serine + H(+) = a 1,2-diacyl-sn-glycero-3-phosphoethanolamine + CO2. It functions in the pathway phospholipid metabolism; phosphatidylethanolamine biosynthesis; phosphatidylethanolamine from CDP-diacylglycerol: step 2/2. Its function is as follows. Catalyzes the formation of phosphatidylethanolamine (PtdEtn) from phosphatidylserine (PtdSer). The polypeptide is Phosphatidylserine decarboxylase proenzyme (Xylella fastidiosa (strain 9a5c)).